Consider the following 109-residue polypeptide: Period circadian protein (109 aa).

The segment at 29–100 (ITAPVDVDPH…TGTSSGSVQL (72 aa)) is disordered. The segment covering 69-97 (SGNFNSGSNLHIGSITNTSNTGTGTSSGS) has biased composition (low complexity).

Forms a heterodimer with timeless (TIM); the complex then translocates into the nucleus. Phosphorylated with a circadian rhythmicity, probably by the double-time protein (dbt). Phosphorylation could be implicated in the stability of per monomer and in the formation of heterodimer per-tim.

It localises to the nucleus. The protein resides in the cytoplasm. Its subcellular location is the perinuclear region. Functionally, essential for biological clock functions. Determines the period length of circadian and ultradian rhythms; an increase in PER dosage leads to shortened circadian rhythms and a decrease leads to lengthened circadian rhythms. Essential for the circadian rhythmicity of locomotor activity, eclosion behavior, and for the rhythmic component of the male courtship song that originates in the thoracic nervous system. The biological cycle depends on the rhythmic formation and nuclear localization of the TIM-PER complex. Light induces the degradation of TIM, which promotes elimination of PER. Nuclear activity of the heterodimer coordinatively regulates PER and TIM transcription through a negative feedback loop. Behaves as a negative element in circadian transcriptional loop. Does not appear to bind DNA, suggesting indirect transcriptional inhibition. The polypeptide is Period circadian protein (per) (Loxocera albiseta (Rust fly)).